A 301-amino-acid polypeptide reads, in one-letter code: Hydroxyquinol 1,2-dioxygenase (301 aa).

Tyr-169, Tyr-202, His-226, and His-228 together coordinate Fe cation.

Belongs to the intradiol ring-cleavage dioxygenase family. The cofactor is Fe(3+).

It catalyses the reaction benzene-1,2,4-triol + O2 = maleylacetate + 2 H(+). It functions in the pathway aromatic compound metabolism. Functionally, involved in resorcinol degradation. Catalyzes the conversion of hydroxyquinol to malelylacetate. Also shows weak activity with catechol, 3-methylcatechol and 4-methylcatechol, but cannot use 4-chlorocatechol, 4-nitrocatechol or protocatechuate. This Corynebacterium glutamicum (strain ATCC 13032 / DSM 20300 / JCM 1318 / BCRC 11384 / CCUG 27702 / LMG 3730 / NBRC 12168 / NCIMB 10025 / NRRL B-2784 / 534) protein is Hydroxyquinol 1,2-dioxygenase.